Here is a 952-residue protein sequence, read N- to C-terminus: UvrABC system protein A (952 aa).

31–38 (GVSGSGKS) is an ATP binding site. Residues 253 to 280 (CPEHGSVLEELEPRIFSFNSPYGACPAC) form a C4-type zinc finger. ABC transporter domains follow at residues 309 to 591 (WSRG…PQSL) and 611 to 938 (GNGK…AFLA). 643-650 (GPSGSGKS) is a binding site for ATP. A C4-type zinc finger spans residues 742-768 (CEACGGDGTVKIEMLFLPDLYVPCEVC).

This sequence belongs to the ABC transporter superfamily. UvrA family. In terms of assembly, forms a heterotetramer with UvrB during the search for lesions.

It is found in the cytoplasm. Its function is as follows. The UvrABC repair system catalyzes the recognition and processing of DNA lesions. UvrA is an ATPase and a DNA-binding protein. A damage recognition complex composed of 2 UvrA and 2 UvrB subunits scans DNA for abnormalities. When the presence of a lesion has been verified by UvrB, the UvrA molecules dissociate. The chain is UvrABC system protein A from Thermus thermophilus (strain ATCC 27634 / DSM 579 / HB8).